A 148-amino-acid chain; its full sequence is Ubiquitin-conjugating enzyme E2-16 kDa (148 aa).

A UBC core domain is found at 2-148 (SSSKRIAKEL…AKEWTKKYAV (147 aa)). Serine 12 carries the post-translational modification Phosphoserine. Catalysis depends on cysteine 86, which acts as the Glycyl thioester intermediate. A Glycyl lysine isopeptide (Lys-Gly) (interchain with G-Cter in ubiquitin) cross-link involves residue lysine 91.

This sequence belongs to the ubiquitin-conjugating enzyme family. In terms of assembly, component of the RSP5-UBA1-UBC5 ubiquitin ligase complex composed of E3 RSP5, E1 UBA1 and E2 UBC5. The N-terminus is blocked.

It catalyses the reaction S-ubiquitinyl-[E1 ubiquitin-activating enzyme]-L-cysteine + [E2 ubiquitin-conjugating enzyme]-L-cysteine = [E1 ubiquitin-activating enzyme]-L-cysteine + S-ubiquitinyl-[E2 ubiquitin-conjugating enzyme]-L-cysteine.. It participates in protein modification; protein ubiquitination. In terms of biological role, catalyzes the covalent attachment of ubiquitin to other proteins. Mediates the selective degradation of short-lived and abnormal proteins. The RSP5-UBA1-UBC5 ubiquitin ligase complex ubiquitinates RPO21 forming 'Lys-63'-linked polyubiquitin chains. This chain is Ubiquitin-conjugating enzyme E2-16 kDa (UBC5), found in Saccharomyces cerevisiae (strain ATCC 204508 / S288c) (Baker's yeast).